Reading from the N-terminus, the 605-residue chain is MNLRTSSTLLSLLILTVPIMASNFYPYTKKSYPIYVKTMVSYAFLVSLIPTMIFIQSGQETMISNWHWMTIQTLKLSLSFKLDYFSMILMPVALSVTWSIMEFSMWYMHSDPYINRFFKYLLLFLITMMLLVTANNLFQLFIGWEGVGIMSFLLIGWWYGRTDANTAALQAILYNRIGDVGFLVAMAWFLFNLNTWELQQIFTLNPTNTNLPLTGLLLAATGKSAQFGLHPWLPSAMEGPTPVSALLHSSTMVVAGIFLLIRFYPLTESNKTIQTMMLCLGAITTLFTAICALTQNDIKKIVAFSTSSQLGLMMVTVGINQPHLAFLHICTHAFFKAMLFLCSGSIIHSLNDEQDIRKMGGLYKSLPFTTTALITGSLALTGMPFLTGFYSKDLIIESINTSYTNAWALFITLIATSLTAVYSTRIIYFALLGQPRFPTLILINEDIPLLINPIKRLLVGSIFAGFFISNNITPTTIPQMTMPTYLKTTAMLVTLLGFIVALELNTATQNLKLTPPSNYLKFSNLLGYFPTIMHRLQPLTSLLTSQKVASMLLDLAWLENALPKSISIFQMKTSTLISSQKGQIKLYFLSFLITLTLSLIMLNFT.

15 consecutive transmembrane segments (helical) span residues 8 to 28 (TLLSLLILTVPIMASNFYPYT), 34 to 54 (IYVKTMVSYAFLVSLIPTMIF), 87 to 107 (MILMPVALSVTWSIMEFSMWY), 117 to 137 (FFKYLLLFLITMMLLVTANNL), 140 to 160 (LFIGWEGVGIMSFLLIGWWYG), 171 to 191 (AILYNRIGDVGFLVAMAWFLF), 241 to 261 (TPVSALLHSSTMVVAGIFLLI), 273 to 293 (IQTMMLCLGAITTLFTAICAL), 301 to 321 (IVAFSTSSQLGLMMVTVGINQ), 324 to 344 (LAFLHICTHAFFKAMLFLCSG), 366 to 386 (LPFTTTALITGSLALTGMPFL), 409 to 429 (LFITLIATSLTAVYSTRIIYF), 457 to 477 (LLVGSIFAGFFISNNITPTTI), 482 to 502 (MPTYLKTTAMLVTLLGFIVAL), and 584 to 604 (IKLYFLSFLITLTLSLIMLNF).

This sequence belongs to the complex I subunit 5 family. As to quaternary structure, core subunit of respiratory chain NADH dehydrogenase (Complex I) which is composed of 45 different subunits.

It localises to the mitochondrion inner membrane. It carries out the reaction a ubiquinone + NADH + 5 H(+)(in) = a ubiquinol + NAD(+) + 4 H(+)(out). In terms of biological role, core subunit of the mitochondrial membrane respiratory chain NADH dehydrogenase (Complex I) which catalyzes electron transfer from NADH through the respiratory chain, using ubiquinone as an electron acceptor. Essential for the catalytic activity and assembly of complex I. The polypeptide is NADH-ubiquinone oxidoreductase chain 5 (MT-ND5) (Rousettus amplexicaudatus (Common rousette)).